We begin with the raw amino-acid sequence, 253 residues long: BRI3-binding protein (253 aa).

Transmembrane regions (helical) follow at residues 19–39, 131–151, 164–181, and 190–210; these read VLLP…PGAQ, ALVL…TLGF, FWLV…YILH, and AVLP…MGYW. Residues 219–253 are a coiled coil; the sequence is SPSVEEKLEHLENQVRLLNIRLNRVLENLDRSKDK. At S250 the chain carries Phosphoserine.

Interacts with LETMD1. Interacts with BRI3. Interacts with BRI3; the interaction is weak. Interacts with TMEM238L.

It localises to the mitochondrion outer membrane. Functionally, involved in tumorigenesis and may function by stabilizing p53/TP53. The chain is BRI3-binding protein from Mus musculus (Mouse).